Consider the following 637-residue polypeptide: Sterol 3-beta-glucosyltransferase UGT80A2 (637 aa).

Disordered regions lie at residues 1-29 and 66-112; these read MPEI…RASV and VAES…TERQ. Positions 13-24 are enriched in low complexity; the sequence is SSSSSSSSSSSS. Positions 67–79 are enriched in polar residues; it reads AESSGTGNKSFSR. Basic and acidic residues predominate over residues 103–112; that stretch reads RLDKSKTERQ.

The protein belongs to the glycosyltransferase 28 family. As to expression, expressed in roots, cauline leaf epidermal cells, stomata, stamen, pollen and around the base of siliques.

The enzyme catalyses a sterol + UDP-alpha-D-glucose = a sterol 3-beta-D-glucoside + UDP + H(+). Involved in the biosynthesis of sterol glucosides. Catalyzes the synthesis of steryl glycosides (SGs) and acyl steryl glycosides (ASGs) which are the most abundant sterol derivatives in higher plants. Can act on several sterols like sitosterol, campesterol and stigmasterol. Both UGT80A2 and UGT80B1 are required for the normal production of SGs and ASGs in seeds. This chain is Sterol 3-beta-glucosyltransferase UGT80A2 (UGT80A2), found in Arabidopsis thaliana (Mouse-ear cress).